The following is a 174-amino-acid chain: dCTP deaminase, dUMP-forming (174 aa).

DCTP-binding positions include 93–98, Asp111, 119–121, Gln138, and Tyr151; these read RSSIGR and TLE. The active-site Proton donor/acceptor is the Glu121.

Belongs to the dCTP deaminase family. Homotrimer.

It catalyses the reaction dCTP + 2 H2O = dUMP + NH4(+) + diphosphate. It participates in pyrimidine metabolism; dUMP biosynthesis; dUMP from dCTP: step 1/1. In terms of biological role, bifunctional enzyme that catalyzes both the deamination of dCTP to dUTP and the hydrolysis of dUTP to dUMP without releasing the toxic dUTP intermediate. This Leptospira biflexa serovar Patoc (strain Patoc 1 / Ames) protein is dCTP deaminase, dUMP-forming.